The chain runs to 638 residues: 1,4-alpha-glucan branching enzyme GlgB (638 aa).

The active-site Nucleophile is the Asp303. Glu356 acts as the Proton donor in catalysis.

The protein belongs to the glycosyl hydrolase 13 family. GlgB subfamily. As to quaternary structure, monomer.

The catalysed reaction is Transfers a segment of a (1-&gt;4)-alpha-D-glucan chain to a primary hydroxy group in a similar glucan chain.. It participates in glycan biosynthesis; glycogen biosynthesis. Functionally, catalyzes the formation of the alpha-1,6-glucosidic linkages in glycogen by scission of a 1,4-alpha-linked oligosaccharide from growing alpha-1,4-glucan chains and the subsequent attachment of the oligosaccharide to the alpha-1,6 position. This chain is 1,4-alpha-glucan branching enzyme GlgB, found in Lactobacillus acidophilus (strain ATCC 700396 / NCK56 / N2 / NCFM).